The sequence spans 155 residues: Transcriptional repressor NrdR (155 aa).

The segment at 3–34 (CPFCHAEETKVVDSRLVADGAQVRRRRECLEC) is a zinc-finger region. The ATP-cone domain occupies 49 to 139 (PLIIKRDGRR…VYKRFKDVSD (91 aa)).

Belongs to the NrdR family. The cofactor is Zn(2+).

Negatively regulates transcription of bacterial ribonucleotide reductase nrd genes and operons by binding to NrdR-boxes. The sequence is that of Transcriptional repressor NrdR from Legionella pneumophila (strain Lens).